The chain runs to 69 residues: Protein SlyX homolog (69 aa).

The protein belongs to the SlyX family.

The protein is Protein SlyX homolog of Pseudomonas paraeruginosa (strain DSM 24068 / PA7) (Pseudomonas aeruginosa (strain PA7)).